Reading from the N-terminus, the 888-residue chain is MAATAAERLFSLELLVDWVRLDSPCFASPAVAFRLLDFPPLLILPPAAPDPEPQRGAITFGRGKACLLRLRPAALRRPRLRAALLQLPAVPTPAPLLLGACDILLVPSVGQRGIFTLRGPEAERVGELALFYRLTDLGRFPPGAPQLRSPLSPACITGSEALEVSEPRTKETSKPCTKDTSARCLQCVSNGRFLEAPEPCAKDTDNWSAGDSDASAVQKSWEEAILHSKASSGDMASAPCSPAPSGRTVSPVSLEVTELDFETNTFCPPPLYYTHLTQEKAPSARVEITIEPQRNEPEDLEDAFPETKPVGPTIRPVKHTRAAIQESPPVLLNLPQMQGPGEANEAPCPPQTEQSTVGAIRQLPLLNALLMELSLLCNQPVANPSQVHPHLAWLYRGEHKGPDPSTKSTSRSESKSNKLSAQENEKLVSPQSTKNPKGKHSKISGSPPPKVTKGRLLYGLTNTLRLRLQQTNPGMLVVHEKREQYRRSQIRAVGPKFRIPSWKGKVSSLAAESQMPPQLPGDTLTDSNGKVSSWAVQSQLPPQLPRDRSLDSYGSFAEGSDTSMLISSGFDESSRTREAKQSHAMKKETVGQSENKTVTSLRAPVSPAVSVIPERSPRSNILRGKWKKQVQSPGLSRQDPAVDKAVGEGIDGKQVKAASAADTNENRPPSRKSSCESTSELQCWDGSTSPCYSEDFCTTENNSRSLPAPDSSTGAEYAQKGSWASKSSEARLSTRKNSSESSSVFTPPFSAGSPVCSQKRSRVLKTHDSLEEASSLSTSDFSSQWTNEKENQADPGSSKIRRRQDRSTKLKVGTGHKSSEKSHSARTSQVSSYEPSNLSELELKAIDDIDSASTGFQEEEDGLGSLRISRQCRDICELVINKLPGYTV.

Disordered stretches follow at residues 398 to 454 (EHKG…VTKG), 508 to 602 (SLAA…TSLR), 620 to 642 (NILRGKWKKQVQSPGLSRQDPAV), 654 to 683 (QVKAASAADTNENRPPSRKSSCESTSELQC), and 699 to 836 (TENN…YEPS). Over residues 524-541 (LTDSNGKVSSWAVQSQLP) the composition is skewed to polar residues. Residues 572 to 589 (ESSRTREAKQSHAMKKET) show a composition bias toward basic and acidic residues. The segment covering 590–600 (VGQSENKTVTS) has biased composition (polar residues). Polar residues-rich tracts occupy residues 661-683 (ADTNENRPPSRKSSCESTSELQC), 699-714 (TENNSRSLPAPDSSTG), 722-745 (SWASKSSEARLSTRKNSSESSSVF), 772-786 (EASSLSTSDFSSQWT), and 825-836 (ARTSQVSSYEPS).

In terms of assembly, interacts (via middle region) with microtubules.

It localises to the cytoplasm. It is found in the cytoskeleton. Its subcellular location is the spindle pole. The protein resides in the microtubule organizing center. The protein localises to the centrosome. It localises to the midbody. Functionally, microtubule-associated protein (MAP) that plays a role in the regulation of cell division; promotes microtubule stability and participates in the organization of the spindle midzone and normal progress of cytokinesis. In Rattus norvegicus (Rat), this protein is Microtubule-associated protein 10 (Map10).